A 428-amino-acid polypeptide reads, in one-letter code: Histidine--tRNA ligase (428 aa).

The protein belongs to the class-II aminoacyl-tRNA synthetase family. As to quaternary structure, homodimer.

It localises to the cytoplasm. The enzyme catalyses tRNA(His) + L-histidine + ATP = L-histidyl-tRNA(His) + AMP + diphosphate + H(+). This is Histidine--tRNA ligase from Bordetella avium (strain 197N).